Reading from the N-terminus, the 234-residue chain is Phosphoribosylaminoimidazole-succinocarboxamide synthase (234 aa).

It belongs to the SAICAR synthetase family.

It catalyses the reaction 5-amino-1-(5-phospho-D-ribosyl)imidazole-4-carboxylate + L-aspartate + ATP = (2S)-2-[5-amino-1-(5-phospho-beta-D-ribosyl)imidazole-4-carboxamido]succinate + ADP + phosphate + 2 H(+). The protein operates within purine metabolism; IMP biosynthesis via de novo pathway; 5-amino-1-(5-phospho-D-ribosyl)imidazole-4-carboxamide from 5-amino-1-(5-phospho-D-ribosyl)imidazole-4-carboxylate: step 1/2. The sequence is that of Phosphoribosylaminoimidazole-succinocarboxamide synthase from Exiguobacterium sp. (strain ATCC BAA-1283 / AT1b).